Consider the following 315-residue polypeptide: Malate dehydrogenase (315 aa).

NAD(+)-binding positions include 10-15 and aspartate 34; that span reads GSGFTG. Residues arginine 85 and arginine 91 each contribute to the substrate site. Residues asparagine 98 and 121–123 each bind NAD(+); that span reads LTN. Residues asparagine 123 and arginine 154 each coordinate substrate. The active-site Proton acceptor is histidine 178.

The protein belongs to the LDH/MDH superfamily. MDH type 3 family.

It carries out the reaction (S)-malate + NAD(+) = oxaloacetate + NADH + H(+). Its function is as follows. Catalyzes the reversible oxidation of malate to oxaloacetate. In Symbiobacterium thermophilum (strain DSM 24528 / JCM 14929 / IAM 14863 / T), this protein is Malate dehydrogenase.